Consider the following 415-residue polypeptide: Esterase FrsA (415 aa).

The protein belongs to the FrsA family.

It carries out the reaction a carboxylic ester + H2O = an alcohol + a carboxylate + H(+). Catalyzes the hydrolysis of esters. In Yersinia pseudotuberculosis serotype O:1b (strain IP 31758), this protein is Esterase FrsA.